Reading from the N-terminus, the 106-residue chain is uncharacterized protein (106 aa).

This is an uncharacterized protein from Sinorhizobium fredii (strain NBRC 101917 / NGR234).